Here is a 300-residue protein sequence, read N- to C-terminus: Phosphatidylserine decarboxylase proenzyme (300 aa).

Residues aspartate 113, histidine 169, and serine 256 each act as charge relay system; for autoendoproteolytic cleavage activity in the active site. The active-site Schiff-base intermediate with substrate; via pyruvic acid; for decarboxylase activity is serine 256. Serine 256 bears the Pyruvic acid (Ser); by autocatalysis mark.

Belongs to the phosphatidylserine decarboxylase family. PSD-B subfamily. Prokaryotic type II sub-subfamily. Heterodimer of a large membrane-associated beta subunit and a small pyruvoyl-containing alpha subunit. Pyruvate serves as cofactor. In terms of processing, is synthesized initially as an inactive proenzyme. Formation of the active enzyme involves a self-maturation process in which the active site pyruvoyl group is generated from an internal serine residue via an autocatalytic post-translational modification. Two non-identical subunits are generated from the proenzyme in this reaction, and the pyruvate is formed at the N-terminus of the alpha chain, which is derived from the carboxyl end of the proenzyme. The autoendoproteolytic cleavage occurs by a canonical serine protease mechanism, in which the side chain hydroxyl group of the serine supplies its oxygen atom to form the C-terminus of the beta chain, while the remainder of the serine residue undergoes an oxidative deamination to produce ammonia and the pyruvoyl prosthetic group on the alpha chain. During this reaction, the Ser that is part of the protease active site of the proenzyme becomes the pyruvoyl prosthetic group, which constitutes an essential element of the active site of the mature decarboxylase.

Its subcellular location is the cell membrane. The catalysed reaction is a 1,2-diacyl-sn-glycero-3-phospho-L-serine + H(+) = a 1,2-diacyl-sn-glycero-3-phosphoethanolamine + CO2. It functions in the pathway phospholipid metabolism; phosphatidylethanolamine biosynthesis; phosphatidylethanolamine from CDP-diacylglycerol: step 2/2. Functionally, catalyzes the formation of phosphatidylethanolamine (PtdEtn) from phosphatidylserine (PtdSer). The protein is Phosphatidylserine decarboxylase proenzyme of Ruminiclostridium cellulolyticum (strain ATCC 35319 / DSM 5812 / JCM 6584 / H10) (Clostridium cellulolyticum).